A 194-amino-acid polypeptide reads, in one-letter code: Der GTPase-activating protein YihI (194 aa).

The interval 1 to 87 is disordered; the sequence is MSRQKKSRNI…RDPRLGSRKK (87 aa). Residues 37 to 48 are compositionally biased toward basic and acidic residues; it reads TRYELDAKARED.

The protein belongs to the YihI family. Interacts with Der.

Functionally, a GTPase-activating protein (GAP) that modifies Der/EngA GTPase function. May play a role in ribosome biogenesis. The protein is Der GTPase-activating protein YihI of Mannheimia succiniciproducens (strain KCTC 0769BP / MBEL55E).